The sequence spans 307 residues: D-alanine--D-alanine ligase (307 aa).

The ATP-grasp domain maps to 110-299 (KQLWKGAGLP…FDVLVGEILL (190 aa)). Residue 136-185 (PVIVKPAHEGSSIGMAKADNTEELGEALVAAEKFDQDVLVEAWVNGPEYT) participates in ATP binding. Residues Asp253, Glu266, and Asn268 each coordinate Mg(2+).

It belongs to the D-alanine--D-alanine ligase family. It depends on Mg(2+) as a cofactor. Mn(2+) serves as cofactor.

It localises to the cytoplasm. The enzyme catalyses 2 D-alanine + ATP = D-alanyl-D-alanine + ADP + phosphate + H(+). The protein operates within cell wall biogenesis; peptidoglycan biosynthesis. In terms of biological role, cell wall formation. This Alcanivorax borkumensis (strain ATCC 700651 / DSM 11573 / NCIMB 13689 / SK2) protein is D-alanine--D-alanine ligase.